We begin with the raw amino-acid sequence, 155 residues long: Endoribonuclease YbeY (155 aa).

Zn(2+) is bound by residues His116, His120, and His126.

This sequence belongs to the endoribonuclease YbeY family. The cofactor is Zn(2+).

Its subcellular location is the cytoplasm. In terms of biological role, single strand-specific metallo-endoribonuclease involved in late-stage 70S ribosome quality control and in maturation of the 3' terminus of the 16S rRNA. The protein is Endoribonuclease YbeY of Colwellia psychrerythraea (strain 34H / ATCC BAA-681) (Vibrio psychroerythus).